The following is a 93-amino-acid chain: FMRFamide-like neuropeptides 22 (93 aa).

An N-terminal signal peptide occupies residues Met-1–Ala-19. A propeptide spanning residues Gln-20–Arg-46 is cleaved from the precursor. Residues Phe-55, Phe-67, and Phe-79 each carry the phenylalanine amide modification. Residues Ser-83 to Tyr-93 constitute a propeptide that is removed on maturation.

The protein belongs to the FARP (FMRFamide related peptide) family.

It is found in the secreted. FMRFamides and FMRFamide-like peptides are neuropeptides. Its function is as follows. SPSAKWMRF-amide: Acts as a ligand for the npr-22 receptor in vitro. This Caenorhabditis elegans protein is FMRFamide-like neuropeptides 22.